Reading from the N-terminus, the 66-residue chain is Large ribosomal subunit protein bL33c (66 aa).

Belongs to the bacterial ribosomal protein bL33 family.

It localises to the plastid. Its subcellular location is the chloroplast. This Glycine max (Soybean) protein is Large ribosomal subunit protein bL33c.